A 122-amino-acid chain; its full sequence is Large ribosomal subunit protein uL14 (122 aa).

The protein belongs to the universal ribosomal protein uL14 family. Part of the 50S ribosomal subunit. Forms a cluster with proteins L3 and L19. In the 70S ribosome, L14 and L19 interact and together make contacts with the 16S rRNA in bridges B5 and B8. Interacts with ribosomal silencing factor RsfS, which may inhibit ribosomal subunit association.

Binds to 23S rRNA. Forms part of two intersubunit bridges in the 70S ribosome. This is Large ribosomal subunit protein uL14 from Treponema pallidum (strain Nichols).